A 232-amino-acid chain; its full sequence is Succinyl-CoA:3-ketoacid coenzyme A transferase subunit A (232 aa).

Glycine 24 to glycine 30 serves as a coordination point for CoA.

This sequence belongs to the 3-oxoacid CoA-transferase subunit A family. As to quaternary structure, heterodimer of a subunit A and a subunit B.

The catalysed reaction is a 3-oxo acid + succinyl-CoA = a 3-oxoacyl-CoA + succinate. In Helicobacter pylori (strain ATCC 700392 / 26695) (Campylobacter pylori), this protein is Succinyl-CoA:3-ketoacid coenzyme A transferase subunit A (scoA).